Consider the following 103-residue polypeptide: Large ribosomal subunit protein bL21 (103 aa).

Belongs to the bacterial ribosomal protein bL21 family. Part of the 50S ribosomal subunit. Contacts protein L20.

Functionally, this protein binds to 23S rRNA in the presence of protein L20. This is Large ribosomal subunit protein bL21 from Wigglesworthia glossinidia brevipalpis.